Reading from the N-terminus, the 596-residue chain is Actin-related protein 9 (596 aa).

The segment at 148–178 (LASPAETSPDKGDASASEAVPDVTDSKDTSE) is disordered.

Belongs to the actin family. ARP8 subfamily.

The sequence is that of Actin-related protein 9 (ARP9) from Arabidopsis thaliana (Mouse-ear cress).